Here is a 358-residue protein sequence, read N- to C-terminus: Phosphate acyltransferase (358 aa).

Positions 336 to 358 (SAAGAAPASPETAPTPHPSTRAA) are disordered.

It belongs to the PlsX family. In terms of assembly, homodimer. Probably interacts with PlsY.

The protein resides in the cytoplasm. The enzyme catalyses a fatty acyl-[ACP] + phosphate = an acyl phosphate + holo-[ACP]. The protein operates within lipid metabolism; phospholipid metabolism. Catalyzes the reversible formation of acyl-phosphate (acyl-PO(4)) from acyl-[acyl-carrier-protein] (acyl-ACP). This enzyme utilizes acyl-ACP as fatty acyl donor, but not acyl-CoA. This Cupriavidus pinatubonensis (strain JMP 134 / LMG 1197) (Cupriavidus necator (strain JMP 134)) protein is Phosphate acyltransferase.